The sequence spans 121 residues: Large ribosomal subunit protein uL14 (121 aa).

The protein belongs to the universal ribosomal protein uL14 family. In terms of assembly, part of the 50S ribosomal subunit. Forms a cluster with proteins L3 and L19. In the 70S ribosome, L14 and L19 interact and together make contacts with the 16S rRNA in bridges B5 and B8.

Functionally, binds to 23S rRNA. Forms part of two intersubunit bridges in the 70S ribosome. The protein is Large ribosomal subunit protein uL14 of Bacteroides fragilis (strain ATCC 25285 / DSM 2151 / CCUG 4856 / JCM 11019 / LMG 10263 / NCTC 9343 / Onslow / VPI 2553 / EN-2).